Here is a 355-residue protein sequence, read N- to C-terminus: MTTSLDTVETFGPTSYDDDMGLLCEKADVGALIAQFVPPLYSLVFMVGLLGNVVVVMILIKYRRLRIMTNIYLLNLAISDLLFLFTLPFWIHYVRERNWVFSHGMCKVLSGFYHTGLYSEIFFIILLTIDRYLAIVHAVFALRARTVTFGVITSIVTWGLAVLAALPEFIFYGTEKLFPKTLCSAIYPQDTVYSWRHFHTLKMTILCLALPLLVMAICYTGIIKTLLRCPSKKKYKAIRLIFVIMAVFFIFWTPYNVAILISTYQSVLFGLDCERSKHLDLFVLATEVIAYSHCCVNPVIYAFVGERFRKYLRHFFHRHVLMHLGKYIPFLPSEKLERTSSVSPSTAEPELSIVF.

Residues 1-34 lie on the Extracellular side of the membrane; sequence MTTSLDTVETFGPTSYDDDMGLLCEKADVGALIA. Residues 35-62 traverse the membrane as a helical segment; it reads QFVPPLYSLVFMVGLLGNVVVVMILIKY. The Cytoplasmic portion of the chain corresponds to 63 to 72; that stretch reads RRLRIMTNIY. A helical membrane pass occupies residues 73-93; the sequence is LLNLAISDLLFLFTLPFWIHY. The Extracellular segment spans residues 94-107; that stretch reads VRERNWVFSHGMCK. Cys-106 and Cys-183 are disulfide-bonded. The helical transmembrane segment at 108–129 threads the bilayer; the sequence is VLSGFYHTGLYSEIFFIILLTI. Residues 130–146 lie on the Cytoplasmic side of the membrane; that stretch reads DRYLAIVHAVFALRART. The helical transmembrane segment at 147 to 171 threads the bilayer; it reads VTFGVITSIVTWGLAVLAALPEFIF. At 172–203 the chain is on the extracellular side; the sequence is YGTEKLFPKTLCSAIYPQDTVYSWRHFHTLKM. A helical transmembrane segment spans residues 204 to 223; the sequence is TILCLALPLLVMAICYTGII. Topologically, residues 224-239 are cytoplasmic; that stretch reads KTLLRCPSKKKYKAIR. A helical transmembrane segment spans residues 240–264; sequence LIFVIMAVFFIFWTPYNVAILISTY. At 265 to 281 the chain is on the extracellular side; that stretch reads QSVLFGLDCERSKHLDL. Residues 282–305 form a helical membrane-spanning segment; it reads FVLATEVIAYSHCCVNPVIYAFVG. Residues 306 to 355 lie on the Cytoplasmic side of the membrane; that stretch reads ERFRKYLRHFFHRHVLMHLGKYIPFLPSEKLERTSSVSPSTAEPELSIVF.

The protein belongs to the G-protein coupled receptor 1 family.

It localises to the cell membrane. Receptor for C-C type chemokine. Binds and responds to a variety of chemokines, including CCL11, CCL26, CCL7, CCL13, RANTES(CCL5) and CCL15. Subsequently transduces a signal by increasing the intracellular calcium ions level. In addition acts as a possible functional receptor for NARS1. This chain is C-C chemokine receptor type 3 (CCR3), found in Macaca mulatta (Rhesus macaque).